A 141-amino-acid polypeptide reads, in one-letter code: Alpha-lactalbumin (141 aa).

A signal peptide spans M1–A19. Residues T20–K141 enclose the C-type lysozyme domain. 4 disulfides stabilise this stretch: C25/C139, C47/C130, C80/C96, and C92/C110. N-linked (GlcNAc...) asparagine glycosylation occurs at N64. 3 residues coordinate Ca(2+): D101, D106, and D107.

It belongs to the glycosyl hydrolase 22 family. Lactose synthase (LS) is a heterodimer of a catalytic component, beta1,4-galactosyltransferase (beta4Gal-T1) and a regulatory component, alpha-lactalbumin (LA). Mammary gland specific. Secreted in milk.

Its subcellular location is the secreted. Regulatory subunit of lactose synthase, changes the substrate specificity of galactosyltransferase in the mammary gland making glucose a good acceptor substrate for this enzyme. This enables LS to synthesize lactose, the major carbohydrate component of milk. In other tissues, galactosyltransferase transfers galactose onto the N-acetylglucosamine of the oligosaccharide chains in glycoproteins. The protein is Alpha-lactalbumin (LALBA) of Oryctolagus cuniculus (Rabbit).